We begin with the raw amino-acid sequence, 569 residues long: Atlastin-2 (569 aa).

Positions 1–49 (MAEGGSLRNRTRFGSRSNEAMNHVDYPDENFVEEIQLNSDTEVMEKPRP) are N-terminal hypervariable region (HVR). Residues 1–464 (MAEGGSLRNR…NIFYAARTPA (464 aa)) are Cytoplasmic-facing. In terms of domain architecture, GB1/RHD3-type G spans 80-324 (DLNVVVLSVA…LVPLLLAPEN (245 aa)). Residues Arg93, Lys94, Gly95, Lys96, Ser97, Phe98, Gln163, Arg232, and Asp233 each contribute to the GDP site. Arg93, Lys94, Gly95, Lys96, Ser97, and Phe98 together coordinate GTP. Ser97 lines the Mg(2+) pocket. Residues Arg232 and Asp233 each contribute to the GTP site. The stretch at 244–272 (LEGGNKFLEKRLQVKQNQHEELQNVRKHI) forms a coiled coil. 2 residues coordinate GDP: Val291 and Asn294. Val291 is a binding site for GTP. The 3HB (three-helix bundle) domain stretch occupies residues 362–453 (MLQATAEANN…YANFLKHNDG (92 aa)). The tract at residues 454-462 (KNIFYAART) is linker. A helical membrane pass occupies residues 465 to 485 (TLFAVMFAMYIISGLTGFIGM). At 486–487 (NS) the chain is on the lumenal side. The helical transmembrane segment at 488 to 508 (IATICNLIMGLTLLSFCTWAY) threads the bilayer. Residues 509 to 569 (VKYSGEFREL…DQVSGRLKTN (61 aa)) are Cytoplasmic-facing. The autoinhibitory domain stretch occupies residues 535–569 (KPLSDNLMEDNIRQTVRNSIKAGLTDQVSGRLKTN).

The protein belongs to the TRAFAC class dynamin-like GTPase superfamily. GB1/RHD3 GTPase family. GB1 subfamily. As to quaternary structure, monomeric and homodimeric. The homodimer, transiently formed by two molecules on opposing membranes, is the active form mediating ER membrane fusion.

The protein resides in the endoplasmic reticulum membrane. The enzyme catalyses GTP + H2O = GDP + phosphate + H(+). Its function is as follows. Atlastin-2 (ATL2) is a membrane-anchored GTPase that mediates the GTP-dependent fusion of endoplasmic reticulum (ER) membranes, maintaining the continuous ER network. It facilitates the formation of three-way junctions where ER tubules intersect. Two atlastin-2 on neighboring ER tubules bind GTP and form loose homodimers through the GB1/RHD3-type G domains and 3HB regions. Upon GTP hydrolysis, the 3HB regions tighten, pulling the membranes together to drive their fusion. After fusion, the homodimer disassembles upon release of inorganic phosphate (Pi). Subsequently, GDP dissociates, resetting the monomers to a conformation ready for a new fusion cycle. The protein is Atlastin-2 (atl2) of Xenopus laevis (African clawed frog).